The sequence spans 356 residues: Phosphoribosylformylglycinamidine cyclo-ligase (356 aa).

It belongs to the AIR synthase family.

It localises to the cytoplasm. The catalysed reaction is 2-formamido-N(1)-(5-O-phospho-beta-D-ribosyl)acetamidine + ATP = 5-amino-1-(5-phospho-beta-D-ribosyl)imidazole + ADP + phosphate + H(+). It participates in purine metabolism; IMP biosynthesis via de novo pathway; 5-amino-1-(5-phospho-D-ribosyl)imidazole from N(2)-formyl-N(1)-(5-phospho-D-ribosyl)glycinamide: step 2/2. This chain is Phosphoribosylformylglycinamidine cyclo-ligase, found in Acinetobacter baumannii (strain AB307-0294).